The sequence spans 511 residues: Bifunctional purine biosynthesis protein PurH (511 aa).

One can recognise an MGS-like domain in the interval 1 to 145 (MKKRALVSVS…KNHKFVSVIV (145 aa)).

The protein belongs to the PurH family.

It carries out the reaction (6R)-10-formyltetrahydrofolate + 5-amino-1-(5-phospho-beta-D-ribosyl)imidazole-4-carboxamide = 5-formamido-1-(5-phospho-D-ribosyl)imidazole-4-carboxamide + (6S)-5,6,7,8-tetrahydrofolate. The enzyme catalyses IMP + H2O = 5-formamido-1-(5-phospho-D-ribosyl)imidazole-4-carboxamide. Its pathway is purine metabolism; IMP biosynthesis via de novo pathway; 5-formamido-1-(5-phospho-D-ribosyl)imidazole-4-carboxamide from 5-amino-1-(5-phospho-D-ribosyl)imidazole-4-carboxamide (10-formyl THF route): step 1/1. The protein operates within purine metabolism; IMP biosynthesis via de novo pathway; IMP from 5-formamido-1-(5-phospho-D-ribosyl)imidazole-4-carboxamide: step 1/1. In Bacillus cereus (strain Q1), this protein is Bifunctional purine biosynthesis protein PurH.